A 123-amino-acid polypeptide reads, in one-letter code: Large ribosomal subunit protein uL18 (123 aa).

Belongs to the universal ribosomal protein uL18 family. In terms of assembly, part of the 50S ribosomal subunit; part of the 5S rRNA/L5/L18/L25 subcomplex. Contacts the 5S and 23S rRNAs.

This is one of the proteins that bind and probably mediate the attachment of the 5S RNA into the large ribosomal subunit, where it forms part of the central protuberance. This is Large ribosomal subunit protein uL18 from Chlamydia pneumoniae (Chlamydophila pneumoniae).